Here is a 908-residue protein sequence, read N- to C-terminus: Metabotropic glutamate receptor 8 (908 aa).

An N-terminal signal peptide occupies residues 1 to 33; the sequence is MVCEGKRSTSCPCFFLLTAKFYWILTMMQRTHS. Over 34 to 583 the chain is Extracellular; sequence QEYAHSIRLD…IIKLEWHSPW (550 aa). An intrachain disulfide couples Cys64 to Cys106. Asn95 carries N-linked (GlcNAc...) asparagine glycosylation. L-glutamate-binding positions include Ser156, 177-179, and Tyr227; that span reads AST. Cystine bridges form between Cys246–Cys534, Cys369–Cys384, Cys424–Cys431, Cys516–Cys535, Cys520–Cys538, Cys541–Cys553, and Cys556–Cys569. Asn298 is a glycosylation site (N-linked (GlcNAc...) asparagine). Asp309 is an L-glutamate binding site. Lys401 serves as a coordination point for L-glutamate. Residues Asn452 and Asn480 are each glycosylated (N-linked (GlcNAc...) asparagine). Asn565 carries N-linked (GlcNAc...) asparagine glycosylation. Residues 584 to 608 form a helical membrane-spanning segment; it reads AVVPVFIAILGIIATTFVIVTFVRY. Residues 609-620 lie on the Cytoplasmic side of the membrane; that stretch reads NDTPIVRASGRE. The helical transmembrane segment at 621–641 threads the bilayer; it reads LSYVLLTGIFLCYSITFLMIA. The Extracellular portion of the chain corresponds to 642–647; the sequence is APDTII. A helical membrane pass occupies residues 648 to 668; the sequence is CSFRRIFLGLGMCFSYAALLT. At 669 to 695 the chain is on the cytoplasmic side; sequence KTNRIHRIFEQGKKSVTAPKFISPASQ. A helical transmembrane segment spans residues 696–716; that stretch reads LVITFSLISVQLLGVFVWFVV. Topologically, residues 717 to 746 are extracellular; sequence DPPHTIIDYGEQRTLDPENARGVLKCDISD. A helical membrane pass occupies residues 747–768; the sequence is LSLICSLGYSILLMVTCTVYAI. Residues 769–781 are Cytoplasmic-facing; it reads KTRGVPETFNEAK. A helical transmembrane segment spans residues 782 to 803; sequence PIGFTMYTTCIIWLAFIPIFFG. The Extracellular portion of the chain corresponds to 804-818; the sequence is TAQSAEKMYIQTTTL. The chain crosses the membrane as a helical span at residues 819 to 843; the sequence is TVSMSLSASVSLGMLYMPKVYIIIF. Residues 844-908 are Cytoplasmic-facing; sequence HPEQNVQKRK…TYISYSNHSI (65 aa). Lys882 is covalently cross-linked (Glycyl lysine isopeptide (Lys-Gly) (interchain with G-Cter in SUMO1)).

The protein belongs to the G-protein coupled receptor 3 family. In terms of assembly, interacts with PICK1. Strongly expressed in olfactory bulb, accessory olfactory bulb, and mammillary body. Weaker expression in the retina, and in scattered cells in the cortex and hindbrain.

The protein resides in the cell membrane. In terms of biological role, G-protein coupled receptor for glutamate. Ligand binding causes a conformation change that triggers signaling via guanine nucleotide-binding proteins (G proteins) and modulates the activity of down-stream effectors. Signaling inhibits adenylate cyclase activity. The chain is Metabotropic glutamate receptor 8 (Grm8) from Mus musculus (Mouse).